Reading from the N-terminus, the 379-residue chain is Succinate--CoA ligase [ADP-forming] subunit beta (379 aa).

One can recognise an ATP-grasp domain in the interval 9–236 (KEIARKYGIE…GRDATPYEKV (228 aa)). ATP is bound by residues K46, 53–55 (GRG), E92, V95, and E100. 2 residues coordinate Mg(2+): N192 and D206. Substrate-binding positions include N256 and 313–315 (GIT).

The protein belongs to the succinate/malate CoA ligase beta subunit family. As to quaternary structure, heterotetramer of two alpha and two beta subunits. It depends on Mg(2+) as a cofactor.

It catalyses the reaction succinate + ATP + CoA = succinyl-CoA + ADP + phosphate. It carries out the reaction GTP + succinate + CoA = succinyl-CoA + GDP + phosphate. It functions in the pathway carbohydrate metabolism; tricarboxylic acid cycle; succinate from succinyl-CoA (ligase route): step 1/1. Functionally, succinyl-CoA synthetase functions in the citric acid cycle (TCA), coupling the hydrolysis of succinyl-CoA to the synthesis of either ATP or GTP and thus represents the only step of substrate-level phosphorylation in the TCA. The beta subunit provides nucleotide specificity of the enzyme and binds the substrate succinate, while the binding sites for coenzyme A and phosphate are found in the alpha subunit. The protein is Succinate--CoA ligase [ADP-forming] subunit beta of Desulfurococcus amylolyticus (strain DSM 18924 / JCM 16383 / VKM B-2413 / 1221n) (Desulfurococcus kamchatkensis).